The sequence spans 198 residues: HTH-type transcriptional regulator BetI (198 aa).

The HTH tetR-type domain occupies 8 to 68; that stretch reads PLRRRELIDA…ATMRHLLREL (61 aa). Positions 31-50 form a DNA-binding region, H-T-H motif; sequence TVAQIAHEAGVSPALAHHYF.

It functions in the pathway amine and polyamine biosynthesis; betaine biosynthesis via choline pathway [regulation]. Its function is as follows. Repressor involved in the biosynthesis of the osmoprotectant glycine betaine. It represses transcription of the choline transporter BetT and the genes of BetAB involved in the synthesis of glycine betaine. The chain is HTH-type transcriptional regulator BetI from Brucella melitensis biotype 2 (strain ATCC 23457).